A 129-amino-acid chain; its full sequence is Allergen Bra j 1-E (129 aa).

Residues 28 to 47 are disordered; the sequence is KQAMQSGSGPQPQGPQQRPP. The span at 32–47 shows a compositional bias: low complexity; the sequence is QSGSGPQPQGPQQRPP.

The protein belongs to the 2S seed storage albumins family. As to quaternary structure, the mature protein consists of a small and a large chain linked by two disulfide bonds.

Functionally, this is a 2S seed storage protein. The polypeptide is Allergen Bra j 1-E (Brassica juncea (Indian mustard)).